We begin with the raw amino-acid sequence, 112 residues long: Colipase (112 aa).

Residues 1–17 (MEKVLALLLVTLTVAYA) form the signal peptide. Positions 18–22 (VPDPR) are cleaved as a propeptide — enterostatin, activation peptide. Cystine bridges form between Cys-34–Cys-45, Cys-40–Cys-56, Cys-44–Cys-78, Cys-66–Cys-86, and Cys-80–Cys-104.

The protein belongs to the colipase family. As to quaternary structure, forms a 1:1 stoichiometric complex with pancreatic lipase. As to expression, expressed by the pancreas.

The protein resides in the secreted. Colipase is a cofactor of pancreatic lipase. It allows the lipase to anchor itself to the lipid-water interface. Without colipase the enzyme is washed off by bile salts, which have an inhibitory effect on the lipase. Its function is as follows. Enterostatin has a biological activity as a satiety signal. The chain is Colipase (CLPS) from Sus scrofa (Pig).